A 166-amino-acid chain; its full sequence is uncharacterized protein (166 aa).

Residue 117–124 (AAKSGGKT) participates in ATP binding.

This is an uncharacterized protein from Mycoplasma pneumoniae (strain ATCC 29342 / M129 / Subtype 1) (Mycoplasmoides pneumoniae).